A 365-amino-acid chain; its full sequence is Flagellar P-ring protein (365 aa).

The first 19 residues, 1–19, serve as a signal peptide directing secretion; that stretch reads MFKALAGIVLALVATLAHA.

The protein belongs to the FlgI family. In terms of assembly, the basal body constitutes a major portion of the flagellar organelle and consists of four rings (L,P,S, and M) mounted on a central rod.

Its subcellular location is the periplasm. It localises to the bacterial flagellum basal body. Functionally, assembles around the rod to form the L-ring and probably protects the motor/basal body from shearing forces during rotation. In Salmonella heidelberg (strain SL476), this protein is Flagellar P-ring protein.